The primary structure comprises 309 residues: Glutaminase (309 aa).

Residues Ser65, Asn117, Glu162, Asn169, Tyr193, Tyr245, and Val263 each coordinate substrate.

This sequence belongs to the glutaminase family. In terms of assembly, homotetramer.

It catalyses the reaction L-glutamine + H2O = L-glutamate + NH4(+). The sequence is that of Glutaminase from Bacillus cereus (strain ATCC 10987 / NRS 248).